A 406-amino-acid polypeptide reads, in one-letter code: Phosphopentomutase (406 aa).

Asp10, Asp305, His310, Asp346, His347, and His358 together coordinate Mn(2+).

It belongs to the phosphopentomutase family. The cofactor is Mn(2+).

The protein resides in the cytoplasm. It catalyses the reaction 2-deoxy-alpha-D-ribose 1-phosphate = 2-deoxy-D-ribose 5-phosphate. The enzyme catalyses alpha-D-ribose 1-phosphate = D-ribose 5-phosphate. It participates in carbohydrate degradation; 2-deoxy-D-ribose 1-phosphate degradation; D-glyceraldehyde 3-phosphate and acetaldehyde from 2-deoxy-alpha-D-ribose 1-phosphate: step 1/2. Functionally, isomerase that catalyzes the conversion of deoxy-ribose 1-phosphate (dRib-1-P) and ribose 1-phosphate (Rib-1-P) to deoxy-ribose 5-phosphate (dRib-5-P) and ribose 5-phosphate (Rib-5-P), respectively. This chain is Phosphopentomutase, found in Rhizobium meliloti (strain 1021) (Ensifer meliloti).